A 921-amino-acid polypeptide reads, in one-letter code: MDYKDTLLLPNTTFAMRANLAELEPKRFDKWFENNYAYEKMKQKRQGVSESFTLHDGPPYANGHLHIGHALNKILKDIIIKMHYFQGKKVRFTPGWDCHGLPIEQQVEVKLKDKKQNLSKKQIRELCREHAREFVNIQRDEFKSLGVIADWDEPYLTMKNAFEADIYKALCKIAKKGLLLERSKPVFWSWAAKSALAEAEVEYEEKEDYSIYVAFNLDEASCKKLGVENAKAVIWTTTPWTLPANQAISLNPNEKYIITKEGYIFAKALLENMINKNFTQGEIQKELLGSEFENLSAINPLNQRKSTLILGEHVLMDGGTGLVHTAPGHGEDDYYACLKYNIEVIMPVDDGGYYDETLRAKGLLPEHLLAEFIGLHIFKANERILELLGEALLESSKFTHSYPFCWRTHKPVIYRATKQWFILMDEKKLDGKSLRELALEQLNSVKFYPESGVKRLSSMIENRPDWCISRQRDWGVPIAFFRDKKSQEVIFDDDVLDHLVGIFEKNGADAWWDLEIKDLLPPNSKYNPNNLEKVYDILDVWFDSGSTWEAVLNSARYDAGEYQASMYLEGSDQHRGWFQSSLLISTAINHKTPYKNILTHGFTVDEKGQKMSKSKGNVVLPQNVAKNYGVEILRLWIMLSDYSTDLKISDNILKQVSEQYRKIRNTIRFLLANTNDIEFVETKNFTLLDKWILMRAKIAFEICENAFEKYEFSKGFSVLLNFLSADLSGIYLDICKDRLYCNAKDDSKRVSAQSAMVLIARKLFALLAPSLTYTIDEALEHANVAIKENAKDVFDLLNKQGFEYEYKIEDELFIKSREKFFEIIDGLKKDKIIKSTLELSLQTSANELLSEDLEEIADWFMVSVVESIDEQKALAEFKIDNIGFKIVKSSLNKCPRCWKFLAKEDGCLCPRCNGVEKAKNV.

Positions 59–69 (PYANGHLHIGH) match the 'HIGH' region motif. An L-isoleucyl-5'-AMP-binding site is contributed by Glu569. Residues 610-614 (KMSKS) carry the 'KMSKS' region motif. Position 613 (Lys613) interacts with ATP. Zn(2+) contacts are provided by Cys894, Cys897, Cys909, and Cys912.

The protein belongs to the class-I aminoacyl-tRNA synthetase family. IleS type 1 subfamily. In terms of assembly, monomer. Zn(2+) is required as a cofactor.

Its subcellular location is the cytoplasm. The enzyme catalyses tRNA(Ile) + L-isoleucine + ATP = L-isoleucyl-tRNA(Ile) + AMP + diphosphate. Catalyzes the attachment of isoleucine to tRNA(Ile). As IleRS can inadvertently accommodate and process structurally similar amino acids such as valine, to avoid such errors it has two additional distinct tRNA(Ile)-dependent editing activities. One activity is designated as 'pretransfer' editing and involves the hydrolysis of activated Val-AMP. The other activity is designated 'posttransfer' editing and involves deacylation of mischarged Val-tRNA(Ile). This Campylobacter lari (strain RM2100 / D67 / ATCC BAA-1060) protein is Isoleucine--tRNA ligase.